The primary structure comprises 882 residues: Alanine--tRNA ligase (882 aa).

Zn(2+) contacts are provided by histidine 576, histidine 580, cysteine 678, and histidine 682.

This sequence belongs to the class-II aminoacyl-tRNA synthetase family. Requires Zn(2+) as cofactor.

It localises to the cytoplasm. The catalysed reaction is tRNA(Ala) + L-alanine + ATP = L-alanyl-tRNA(Ala) + AMP + diphosphate. Functionally, catalyzes the attachment of alanine to tRNA(Ala) in a two-step reaction: alanine is first activated by ATP to form Ala-AMP and then transferred to the acceptor end of tRNA(Ala). Also edits incorrectly charged Ser-tRNA(Ala) and Gly-tRNA(Ala) via its editing domain. The chain is Alanine--tRNA ligase from Anaplasma marginale (strain St. Maries).